A 105-amino-acid chain; its full sequence is TPR repeat-containing protein PA0015 (105 aa).

TPR repeat units follow at residues 17–50 and 52–84; these read ALLRFGLGKGYLDAGDAERAAEHLQRCVEQDPKY and AGWKLLGKARQAAGDLAGARQAWEQGLATAATH.

The polypeptide is TPR repeat-containing protein PA0015 (Pseudomonas aeruginosa (strain ATCC 15692 / DSM 22644 / CIP 104116 / JCM 14847 / LMG 12228 / 1C / PRS 101 / PAO1)).